The sequence spans 215 residues: Pyrrolidone-carboxylate peptidase (215 aa).

Active-site residues include glutamate 78, cysteine 141, and histidine 165.

The protein belongs to the peptidase C15 family. In terms of assembly, homotetramer.

It is found in the cytoplasm. The catalysed reaction is Release of an N-terminal pyroglutamyl group from a polypeptide, the second amino acid generally not being Pro.. Removes 5-oxoproline from various penultimate amino acid residues except L-proline. The protein is Pyrrolidone-carboxylate peptidase (pcp) of Streptococcus pyogenes serotype M1.